The chain runs to 469 residues: 3-isopropylmalate dehydratase large subunit (469 aa).

C347, C407, and C410 together coordinate [4Fe-4S] cluster.

The protein belongs to the aconitase/IPM isomerase family. LeuC type 1 subfamily. Heterodimer of LeuC and LeuD. [4Fe-4S] cluster serves as cofactor.

The catalysed reaction is (2R,3S)-3-isopropylmalate = (2S)-2-isopropylmalate. It functions in the pathway amino-acid biosynthesis; L-leucine biosynthesis; L-leucine from 3-methyl-2-oxobutanoate: step 2/4. In terms of biological role, catalyzes the isomerization between 2-isopropylmalate and 3-isopropylmalate, via the formation of 2-isopropylmaleate. This chain is 3-isopropylmalate dehydratase large subunit, found in Proteus mirabilis (strain HI4320).